Here is a 229-residue protein sequence, read N- to C-terminus: MSFLQDPSFFTMGMWSIGAGALGAAALALLLANTDVFLSKPQKAALEYLEDIDLKTLEKEPRTFKAKELWEKNGAVIMAVRRPGCFLCREEAADLSSLKSMLDQLGVPLYAVVKEHIRTEVKDFQPYFKGEIFLDEKKKFYGPQRRKMMFMGFIRLGVWYNFFRAWNGGFSGNLEGEGFILGGVFVVGSGKQGILLEHREKEFGDKVNLLSVLEAAKMIKPQTLASEKK.

Residues 14–112 (MWSIGAGALG…DQLGVPLYAV (99 aa)) are thioredoxin fold. Catalysis depends on redox-active residues cysteine 85 and cysteine 88.

The protein belongs to the peroxiredoxin-like PRXL2 family. PRXL2A subfamily. In terms of tissue distribution, expressed in CSF1 and TNFSF11-stimulated CD14(+) peripheral blood mononuclear cells (PBMCs).

Its subcellular location is the cytoplasm. It localises to the secreted. Its function is as follows. Involved in redox regulation of the cell. Acts as an antioxidant. Inhibits TNFSF11-induced NFKB1 and JUN activation and osteoclast differentiation. May affect bone resorption and help to maintain bone mass. Acts as a negative regulator of macrophage-mediated inflammation by inhibiting macrophage production of inflammatory cytokines, probably through suppression of the MAPK signaling pathway. The sequence is that of Peroxiredoxin-like 2A from Homo sapiens (Human).